The following is a 337-amino-acid chain: Glyceraldehyde-3-phosphate dehydrogenase 2 (337 aa).

NAD(+) is bound by residues 11–12, Asp35, Arg79, and Thr121; that span reads RI. D-glyceraldehyde 3-phosphate is bound by residues 153-155, Thr184, Arg199, 212-213, and Arg235; these read SCT and TG. Catalysis depends on Cys154, which acts as the Nucleophile. An NAD(+)-binding site is contributed by Asn317.

Belongs to the glyceraldehyde-3-phosphate dehydrogenase family. As to quaternary structure, homotetramer.

Its subcellular location is the cytoplasm. It carries out the reaction D-glyceraldehyde 3-phosphate + phosphate + NADP(+) = (2R)-3-phospho-glyceroyl phosphate + NADPH + H(+). The catalysed reaction is D-glyceraldehyde 3-phosphate + phosphate + NAD(+) = (2R)-3-phospho-glyceroyl phosphate + NADH + H(+). Its pathway is carbohydrate degradation; glycolysis; pyruvate from D-glyceraldehyde 3-phosphate: step 1/5. Functionally, involved in photosynthetic carbon assimilation. Catalyzes the NAD(P)-dependent oxidative phosphorylation of glyceraldehyde 3-phosphate (G3P) to 1,3-bisphosphoglycerate (BPG). The first reaction step involves the formation of a hemiacetal intermediate between G3P and a cysteine residue, and this hemiacetal intermediate is then oxidized to a thioester, with concomitant reduction of NAD to NADH. The reduced NADH is then exchanged with the second NAD, and the thioester is attacked by a nucleophilic inorganic phosphate to produce BPG. It can use both NADP and NAD. This is Glyceraldehyde-3-phosphate dehydrogenase 2 (gap2) from Synechocystis sp. (strain ATCC 27184 / PCC 6803 / Kazusa).